Here is a 285-residue protein sequence, read N- to C-terminus: Ubiquinone biosynthesis protein COQ4, mitochondrial (285 aa).

A mitochondrion-targeting transit peptide spans 1-11 (MPPAVRQGMRT). The Zn(2+) site is built by His166, Asp167, His170, and Glu182.

The protein belongs to the COQ4 family. As to quaternary structure, component of a multi-subunit COQ enzyme complex, composed of at least COQ3, COQ4, COQ5, COQ6, COQ7 and COQ9. Zn(2+) serves as cofactor.

It localises to the mitochondrion inner membrane. It catalyses the reaction a 4-hydroxy-3-methoxy-5-(all-trans-polyprenyl)benzoate + H(+) = a 2-methoxy-6-(all-trans-polyprenyl)phenol + CO2. Its pathway is cofactor biosynthesis; ubiquinone biosynthesis. Lyase that catalyzes the C1-decarboxylation of 4-hydroxy-3-methoxy-5-(all-trans-polyprenyl)benzoic acid into 2-methoxy-6-(all-trans-polyprenyl)phenol during ubiquinone biosynthesis. The sequence is that of Ubiquinone biosynthesis protein COQ4, mitochondrial from Paracoccidioides lutzii (strain ATCC MYA-826 / Pb01) (Paracoccidioides brasiliensis).